The following is a 257-amino-acid chain: Homeobox protein goosecoid (257 aa).

The segment at residues 160–219 (KRRHRTIFTDEQLEALENLFQETKYPDVGTREQLARKVHLREEKVEVWFKNRRAKWRRQK) is a DNA-binding region (homeobox). The tract at residues 213–257 (AKWRRQKRSSSEESENAEKWNKTSSSKASPEKREEEGKSDLDSDS) is disordered. The segment covering 241 to 257 (SPEKREEEGKSDLDSDS) has biased composition (basic and acidic residues).

Belongs to the paired homeobox family. Bicoid subfamily.

The protein localises to the nucleus. In terms of biological role, regulates chordin (CHRD). May play a role in spatial programing within discrete embryonic fields or lineage compartments during organogenesis. In concert with NKX3-2, plays a role in defining the structural components of the middle ear; required for the development of the entire tympanic ring. Probably involved in the regulatory networks that define neural crest cell fate specification and determine mesoderm cell lineages in mammals. The chain is Homeobox protein goosecoid (GSC) from Saguinus labiatus (Red-chested mustached tamarin).